A 65-amino-acid polypeptide reads, in one-letter code: Keratin-associated protein 20-2 (65 aa).

Belongs to the KRTAP type 20 family. As to quaternary structure, interacts with hair keratins.

In terms of biological role, in the hair cortex, hair keratin intermediate filaments are embedded in an interfilamentous matrix, consisting of hair keratin-associated proteins (KRTAP), which are essential for the formation of a rigid and resistant hair shaft through their extensive disulfide bond cross-linking with abundant cysteine residues of hair keratins. The matrix proteins include the high-sulfur and high-glycine-tyrosine keratins. This chain is Keratin-associated protein 20-2 (KRTAP20-2), found in Homo sapiens (Human).